A 197-amino-acid chain; its full sequence is Probable UbiX-like flavin prenyltransferase (197 aa).

FMN-binding positions include 9–11 (GAT), Ser-36, 87–90 (SMKT), and Arg-122.

Belongs to the UbiX/PAD1 family. YclB subfamily. As to quaternary structure, homododecamer.

It catalyses the reaction dimethylallyl phosphate + FMNH2 = prenylated FMNH2 + phosphate. In terms of biological role, involved in the non-oxidative decarboxylation and detoxification of phenolic derivatives under both aerobic and anaerobic conditions. Flavin prenyltransferase that catalyzes the synthesis of the prenylated FMN cofactor (prenyl-FMN) for phenolic acid decarboxylase. This chain is Probable UbiX-like flavin prenyltransferase, found in Escherichia coli O157:H7.